The chain runs to 248 residues: Protein canopy homolog 4 (248 aa).

The first 21 residues, 1–21 (MGPVRLGILLFLFLAVHEAWA), serve as a signal peptide directing secretion. Cystine bridges form between Cys-38/Cys-196, Cys-41/Cys-184, and Cys-94/Cys-156. Residues 200 to 248 (TWTGKEITDGEEKTEGEEEQEEEEEEEEEEGGDKMTKTGSHPKLDREDL) are disordered. Positions 213-230 (TEGEEEQEEEEEEEEEEG) are enriched in acidic residues. Residues 231-248 (GDKMTKTGSHPKLDREDL) are compositionally biased toward basic and acidic residues.

This sequence belongs to the canopy family. Interacts with TLR4.

It is found in the secreted. Functionally, plays a role in the regulation of the cell surface expression of TLR4. The protein is Protein canopy homolog 4 (CNPY4) of Homo sapiens (Human).